The primary structure comprises 158 residues: Large ribosomal subunit protein uL11 (158 aa).

This sequence belongs to the universal ribosomal protein uL11 family. In terms of assembly, part of the ribosomal stalk of the 50S ribosomal subunit. Interacts with L10 and the large rRNA to form the base of the stalk. L10 forms an elongated spine to which L12 dimers bind in a sequential fashion forming a multimeric L10(L12)X complex.

Forms part of the ribosomal stalk which helps the ribosome interact with GTP-bound translation factors. The chain is Large ribosomal subunit protein uL11 from Methanoculleus marisnigri (strain ATCC 35101 / DSM 1498 / JR1).